Here is a 300-residue protein sequence, read N- to C-terminus: Porphobilinogen deaminase (300 aa).

S-(dipyrrolylmethanemethyl)cysteine is present on Cys-241.

This sequence belongs to the HMBS family. Monomer. Dipyrromethane serves as cofactor.

It catalyses the reaction 4 porphobilinogen + H2O = hydroxymethylbilane + 4 NH4(+). The protein operates within porphyrin-containing compound metabolism; protoporphyrin-IX biosynthesis; coproporphyrinogen-III from 5-aminolevulinate: step 2/4. In terms of biological role, tetrapolymerization of the monopyrrole PBG into the hydroxymethylbilane pre-uroporphyrinogen in several discrete steps. The chain is Porphobilinogen deaminase from Sorangium cellulosum (strain So ce56) (Polyangium cellulosum (strain So ce56)).